A 1675-amino-acid chain; its full sequence is Clathrin heavy chain 1 (1675 aa).

N-acetylalanine is present on alanine 2. Residues 2-479 are globular terminal domain; sequence AQILPIRFQE…VDPTLALSVY (478 aa). WD40-like repeat stretches follow at residues 24–67, 68–107, 108–149, 150–195, 196–257, 258–301, and 302–330; these read NIGF…RPIS, ADSA…MTDD, VTFW…SSLA, GCQI…QPIE, GHAA…PEAQ, NDFP…ISGE, and TIFV…VCVE. Serine 67 bears the Phosphoserine mark. A Phosphothreonine modification is found at threonine 105. A Phosphotyrosine modification is found at tyrosine 184. Phosphothreonine is present on threonine 394. The interval 449 to 465 is binding site for the uncoating ATPase, involved in lattice disassembly; it reads EKWLKEDKLECSEELGD. Residues 480-523 form a flexible linker region; sequence LRANVPNKVIQCFAETGQVQKIVLYAKKVGYTPDWIFLLRNVMR. A distal segment region spans residues 524–634; that stretch reads ISPDQGQQFA…RALEHFTDLY (111 aa). The segment at 524–1675 is heavy chain arm; it reads ISPDQGQQFA…QPQPGFGYSM (1152 aa). CHCR repeat units follow at residues 537–683, 686–828, 833–972, 979–1124, 1128–1269, 1274–1420, and 1423–1566; these read VQDE…QICV, ASKY…SEDV, ILVV…PLID, LSET…VKEA, YIKA…FRLA, LHIV…LLLN, and LMVL…RECF. Tyrosine 634 bears the Phosphotyrosine mark. Residues 639 to 1675 are proximal segment; sequence AVVHTHLLNP…QPQPGFGYSM (1037 aa). Lysine 737 is subject to N6-succinyllysine. Residue lysine 856 is modified to N6-acetyllysine. A Phosphotyrosine modification is found at tyrosine 899. Serine 1167 carries the phosphoserine modification. Tyrosine 1206 carries the phosphotyrosine modification. The segment at 1213 to 1522 is involved in binding clathrin light chain; sequence AAKLLYNNVS…YLFKGNNRWK (310 aa). Serine 1229 carries the phosphoserine modification. Residue lysine 1441 is modified to N6-acetyllysine; alternate. Lysine 1441 bears the N6-succinyllysine; alternate mark. A phosphotyrosine mark is found at tyrosine 1477 and tyrosine 1487. Phosphoserine is present on serine 1494. At lysine 1501 the chain carries N6-acetyllysine. Positions 1550 to 1675 are trimerization; it reads AEELLQWFLQ…QPQPGFGYSM (126 aa).

This sequence belongs to the clathrin heavy chain family. In terms of assembly, clathrin triskelions, composed of 3 heavy chains and 3 light chains, are the basic subunits of the clathrin coat. In the presence of light chains, hub assembly is influenced by both the pH and the concentration of calcium. Interacts with HIP1. Interacts with DENND1A, DENND1B and DENND1C. Interacts with OCRL. Interacts with ERBB2. Interacts with FKBP6. Interacts with CKAP5 and TACC3 forming the TACC3/ch-TOG/clathrin complex located at spindle inter-microtubules bridges; the complex implicates clathrin triskelions; TACC3 and CLTC are proposed to form a composite microtubule interaction surface. Interacts with ATG16L1 (via N-terminus). Interacts with RFTN1; the interaction occurs in response to pathogens. Interacts with TMEM106B (via N-terminus). Interacts with DNAJC6; this interaction produces a local change in heavy-chain contacts, creating a detectable global distortion of the clathrin coat and leads to the recruitment of HSPA8.

Its subcellular location is the cytoplasmic vesicle membrane. The protein localises to the membrane. The protein resides in the coated pit. It is found in the melanosome. It localises to the cytoplasm. Its subcellular location is the cytoskeleton. The protein localises to the spindle. Clathrin is the major protein of the polyhedral coat of coated pits and vesicles. Two different adapter protein complexes link the clathrin lattice either to the plasma membrane or to the trans-Golgi network. Acts as a component of the TACC3/ch-TOG/clathrin complex proposed to contribute to stabilization of kinetochore fibers of the mitotic spindle by acting as inter-microtubule bridge. The TACC3/ch-TOG/clathrin complex is required for the maintenance of kinetochore fiber tension. Plays a role in early autophagosome formation. Interaction with DNAJC6 mediates the recruitment of HSPA8 to the clathrin lattice and creates local destabilization of the lattice promoting uncoating. This Bos taurus (Bovine) protein is Clathrin heavy chain 1.